Reading from the N-terminus, the 72-residue chain is Protein SlyX homolog (72 aa).

A disordered region spans residues 53–72 (KDISPSNIRREEEETPPPHY).

The protein belongs to the SlyX family.

The polypeptide is Protein SlyX homolog (Marinobacter nauticus (strain ATCC 700491 / DSM 11845 / VT8) (Marinobacter aquaeolei)).